The primary structure comprises 312 residues: Methionyl-tRNA formyltransferase (312 aa).

109–112 (SLLP) is a (6S)-5,6,7,8-tetrahydrofolate binding site.

Belongs to the Fmt family.

The enzyme catalyses L-methionyl-tRNA(fMet) + (6R)-10-formyltetrahydrofolate = N-formyl-L-methionyl-tRNA(fMet) + (6S)-5,6,7,8-tetrahydrofolate + H(+). Its function is as follows. Attaches a formyl group to the free amino group of methionyl-tRNA(fMet). The formyl group appears to play a dual role in the initiator identity of N-formylmethionyl-tRNA by promoting its recognition by IF2 and preventing the misappropriation of this tRNA by the elongation apparatus. The polypeptide is Methionyl-tRNA formyltransferase (Geotalea daltonii (strain DSM 22248 / JCM 15807 / FRC-32) (Geobacter daltonii)).